Here is a 309-residue protein sequence, read N- to C-terminus: Zinc transporter ZIP2 (309 aa).

Residues 1 to 8 are Extracellular-facing; the sequence is MEVLLGVK. The chain crosses the membrane as a helical span at residues 9-29; that stretch reads IGCLLALLVLTLGCGLTPIYV. The Cytoplasmic segment spans residues 30 to 43; that stretch reads KWFQMDAATGHHHR. The chain crosses the membrane as a helical span at residues 44–64; that stretch reads VLSLLGCTSAGVFLGAGLMHM. The Extracellular portion of the chain corresponds to 65–103; that stretch reads TAEALEGIESEIQKFVEQNSTGSKGNSSRDAASSYVEYP. The chain crosses the membrane as a helical span at residues 104–124; the sequence is YGELVISLGFFFVFLLESLAL. Topologically, residues 125 to 164 are cytoplasmic; that stretch reads QCCHGAAGGSTVQEEEWGGTHAFGFHKHPAVPSPSRGPLR. A helical membrane pass occupies residues 165–185; that stretch reads ALVLLLSLSFHSVFEGLAVGL. His175 and Glu179 together coordinate Zn(2+). Over 186–191 the chain is Extracellular; that stretch reads QATVAA. Residues 192–212 form a helical membrane-spanning segment; that stretch reads TIQLCVAVLAHKGLVVFSVGL. A Zn(2+)-binding site is contributed by His202. At 213 to 225 the chain is on the cytoplasmic side; it reads RLGKIGTGPRWAT. The chain crosses the membrane as a helical span at residues 226–246; it reads FCILSLALMSPVGLALGLTVA. Residues 247–258 are Extracellular-facing; that stretch reads GGASGQTQGLAQ. A helical transmembrane segment spans residues 259 to 279; sequence AVLEGIAAGTFLYVTFLEILP. Glu276 contributes to the Zn(2+) binding site. Residues 280–288 are Cytoplasmic-facing; it reads RELACPEAP. A helical transmembrane segment spans residues 289–309; it reads LAKYSCVAAGFAFMALIALWA.

It belongs to the ZIP transporter (TC 2.A.5) family. High expression in the liver, skin and ovary.

It localises to the cell membrane. The enzyme catalyses Zn(2+)(in) = Zn(2+)(out). It catalyses the reaction Cd(2+)(in) = Cd(2+)(out). In terms of biological role, transporter for the divalent cation Zn(2+). Mediates the influx of Zn(2+) into cells from extracellular space. The Zn(2+) uniporter activity is independent of H(+)-driving force, but is modulated by extracellular pH and membrane potential. Transports also other divalent cations Zn(2+), Cd2(+), Cu2(+), Co2(+) in the order of decreasing affinity, respectively. In the skin, aids in the differentiation of keratinocytes in the epidermis. This Mus musculus (Mouse) protein is Zinc transporter ZIP2 (Slc39a2).